The primary structure comprises 86 residues: Anti-adapter protein IraP (86 aa).

Residues Met-1 to Leu-36 are a coiled coil.

Belongs to the IraP family. As to quaternary structure, interacts with RssB.

The protein localises to the cytoplasm. In terms of biological role, inhibits RpoS proteolysis by regulating RssB activity, thereby increasing the stability of the sigma stress factor RpoS especially during phosphate starvation, but also in stationary phase and during nitrogen starvation. Its effect on RpoS stability is due to its interaction with RssB, which probably blocks the interaction of RssB with RpoS, and the consequent delivery of the RssB-RpoS complex to the ClpXP protein degradation pathway. This Cronobacter sakazakii (strain ATCC BAA-894) (Enterobacter sakazakii) protein is Anti-adapter protein IraP.